The primary structure comprises 114 residues: Small ribosomal subunit protein uS17 (114 aa).

The protein belongs to the universal ribosomal protein uS17 family. As to quaternary structure, part of the 30S ribosomal subunit.

In terms of biological role, one of the primary rRNA binding proteins, it binds specifically to the 5'-end of 16S ribosomal RNA. The chain is Small ribosomal subunit protein uS17 from Aeropyrum pernix (strain ATCC 700893 / DSM 11879 / JCM 9820 / NBRC 100138 / K1).